The sequence spans 569 residues: Falcipain-1 (569 aa).

Topologically, residues Met1–Thr35 are cytoplasmic. Residues Met1 to Lys332 constitute a propeptide, activation peptide. A helical; Signal-anchor for type II membrane protein membrane pass occupies residues Phe36–Phe56. The Lumenal segment spans residues Thr57–Leu569. N-linked (GlcNAc...) asparagine glycosylation is found at Asn58, Asn98, Asn121, and Asn127. The interval Leu97–Asn118 is disordered. 3 cysteine pairs are disulfide-bonded: Cys354-Cys395, Cys388-Cys428, and Cys413-Cys433. Cys357 is a catalytic residue. N-linked (GlcNAc...) asparagine glycosylation is found at Asn479 and Asn487. Cys482 and Cys558 form a disulfide bridge. Catalysis depends on residues His488 and Asn533.

The protein belongs to the peptidase C1 family. Contains disulfide bonds.

It is found in the membrane. The protein localises to the cytoplasmic granule. In terms of biological role, cysteine protease. In the mosquito midgut, required for parasite development. The protein is Falcipain-1 of Plasmodium falciparum (isolate 3D7).